An 84-amino-acid polypeptide reads, in one-letter code: Beta-defensin 119 (84 aa).

The first 21 residues, 1–21, serve as a signal peptide directing secretion; that stretch reads MKLLYLFLAILLAIEEPVISG. 3 cysteine pairs are disulfide-bonded: Cys28–Cys55, Cys35–Cys49, and Cys39–Cys56.

The protein belongs to the beta-defensin family. Abundant expression in the male reproductive tract only. Abundant expressed in testis and the caput region of epididymis, but low in the corpus region.

It is found in the secreted. Its function is as follows. Has antibacterial activity. In Homo sapiens (Human), this protein is Beta-defensin 119 (DEFB119).